The following is a 228-amino-acid chain: 2-C-methyl-D-erythritol 4-phosphate cytidylyltransferase (228 aa).

It belongs to the IspD/TarI cytidylyltransferase family. IspD subfamily.

It catalyses the reaction 2-C-methyl-D-erythritol 4-phosphate + CTP + H(+) = 4-CDP-2-C-methyl-D-erythritol + diphosphate. It functions in the pathway isoprenoid biosynthesis; isopentenyl diphosphate biosynthesis via DXP pathway; isopentenyl diphosphate from 1-deoxy-D-xylulose 5-phosphate: step 2/6. Functionally, catalyzes the formation of 4-diphosphocytidyl-2-C-methyl-D-erythritol from CTP and 2-C-methyl-D-erythritol 4-phosphate (MEP). The polypeptide is 2-C-methyl-D-erythritol 4-phosphate cytidylyltransferase (Geobacillus thermodenitrificans (strain NG80-2)).